A 594-amino-acid chain; its full sequence is Membrane protein insertase YidC (594 aa).

A helical membrane pass occupies residues 7 to 27 (YFVAIALSVLILIAWQFFYVS). A disordered region spans residues 36–73 (AAEQAQQAQQTQQQPGAQPAAPGQALPGGAIPSAGESR). Residues 37 to 65 (AEQAQQAQQTQQQPGAQPAAPGQALPGGA) show a composition bias toward low complexity. 4 helical membrane-spanning segments follow: residues 369–389 (LFGN…LIFF), 443–463 (WPIL…YVTI), 488–508 (LFGL…WPII), and 532–552 (FTWM…GLVI).

The protein belongs to the OXA1/ALB3/YidC family. Type 1 subfamily. As to quaternary structure, interacts with the Sec translocase complex via SecD. Specifically interacts with transmembrane segments of nascent integral membrane proteins during membrane integration.

Its subcellular location is the cell inner membrane. Functionally, required for the insertion and/or proper folding and/or complex formation of integral membrane proteins into the membrane. Involved in integration of membrane proteins that insert both dependently and independently of the Sec translocase complex, as well as at least some lipoproteins. Aids folding of multispanning membrane proteins. The chain is Membrane protein insertase YidC from Rhizobium meliloti (strain 1021) (Ensifer meliloti).